The chain runs to 338 residues: MDQIKKIIDNFKQTISSVDNQKELIVTKNIFVKKHVTPLFQQLRELEELAVKKAFGKELNFLQEAIQELFEEKNQQLVINLDQNQKPAYDLMIPALDLVDGSIHPLNLVVNQIVDFFKKFNFTIVNYPELVTTKHCFDDLNIPLDHPGRSKTDTFYVSDKQLLRTHCTAGTIEAIAAMNKHKDIRVISFGNVYRNDTDDATHSHQFMQMDFMWVNKDLSLSNLKWFVTKFIEHMFGNDLKTRFRLSHFPFTEPSFEVDVECWNCQSGCFLCKKTRWIEIMGSGILHPKVLEAAHIDPEKMVGIAAGIGIERIAMLKNNITDIRDFYFNDFRFIKQFYE.

Glu-252 contributes to the Mg(2+) binding site.

The protein belongs to the class-II aminoacyl-tRNA synthetase family. Phe-tRNA synthetase alpha subunit type 1 subfamily. As to quaternary structure, tetramer of two alpha and two beta subunits. Mg(2+) serves as cofactor.

The protein localises to the cytoplasm. It catalyses the reaction tRNA(Phe) + L-phenylalanine + ATP = L-phenylalanyl-tRNA(Phe) + AMP + diphosphate + H(+). This is Phenylalanine--tRNA ligase alpha subunit from Mycoplasmoides gallisepticum (strain R(low / passage 15 / clone 2)) (Mycoplasma gallisepticum).